The sequence spans 168 residues: tRNA (cytidine(56)-2'-O)-methyltransferase (168 aa).

Residues L79 and 104–108 contribute to the S-adenosyl-L-methionine site; that span reads GAEKV.

This sequence belongs to the aTrm56 family. Homodimer.

The protein resides in the cytoplasm. The enzyme catalyses cytidine(56) in tRNA + S-adenosyl-L-methionine = 2'-O-methylcytidine(56) in tRNA + S-adenosyl-L-homocysteine + H(+). Its function is as follows. Specifically catalyzes the AdoMet-dependent 2'-O-ribose methylation of cytidine at position 56 in tRNAs. This chain is tRNA (cytidine(56)-2'-O)-methyltransferase, found in Archaeoglobus fulgidus (strain ATCC 49558 / DSM 4304 / JCM 9628 / NBRC 100126 / VC-16).